Here is a 663-residue protein sequence, read N- to C-terminus: Transmembrane 9 superfamily member 2 (663 aa).

The N-terminal stretch at methionine 1–proline 28 is a signal peptide. Residues glycine 29–glutamine 300 lie on the Lumenal side of the membrane. Residues tryptophan 301–isoleucine 321 form a helical membrane-spanning segment. The Cytoplasmic portion of the chain corresponds to methionine 322 to glutamine 374. Residues isoleucine 375–asparagine 395 traverse the membrane as a helical segment. Residues arginine 396–alanine 398 lie on the Lumenal side of the membrane. A helical transmembrane segment spans residues leucine 399 to alanine 419. The Cytoplasmic segment spans residues arginine 420–threonine 437. The helical transmembrane segment at serine 438 to glycine 458 threads the bilayer. The Lumenal portion of the chain corresponds to glutamate 459–proline 466. Residues phenylalanine 467–isoleucine 487 traverse the membrane as a helical segment. The Cytoplasmic portion of the chain corresponds to glycine 488–proline 522. A helical transmembrane segment spans residues glycine 523–leucine 543. Residues asparagine 544–methionine 554 lie on the Lumenal side of the membrane. A helical membrane pass occupies residues phenylalanine 555 to leucine 575. Residues leucine 576 to arginine 591 are Cytoplasmic-facing. The helical transmembrane segment at serine 592–phenylalanine 612 threads the bilayer. The Lumenal portion of the chain corresponds to serine 613–methionine 631. The chain crosses the membrane as a helical span at residues isoleucine 632–phenylalanine 652. At valine 653–aspartate 663 the chain is on the cytoplasmic side.

Belongs to the nonaspanin (TM9SF) (TC 9.A.2) family. In terms of tissue distribution, ubiquitously expressed. Especially abundant in pancreas, highly expressed in kidney, lower levels in heart, brain, skeletal muscle and placenta. Lowest expression in lung and liver.

It localises to the endosome membrane. The protein localises to the golgi outpost. It is found in the cytoplasm. The protein resides in the cytoskeleton. Its subcellular location is the microtubule organizing center. Its function is as follows. In the intracellular compartments, may function as a channel or small molecule transporter. This is Transmembrane 9 superfamily member 2 (TM9SF2) from Homo sapiens (Human).